We begin with the raw amino-acid sequence, 184 residues long: Fungal defensin copsin (184 aa).

Residues 1-23 (MKLSTSLLAIVAVASTFIGNALS) form the signal peptide. A propeptide spanning residues 24–127 (ATTVPGCFAE…LGRVLPVEKR (104 aa)) is cleaved from the precursor. Q128 is subject to Pyrrolidone carboxylic acid. Cystine bridges form between C130–C159, C137–C167, C145–C175, C149–C177, C152–C184, and C162–C181.

It belongs to the invertebrate defensin family. Post-translationally, contains a unique connectivity of 6 cysteine bonds in contrast to most other CS-alpha-beta defensins which are linked by 3 or 4 disulfide bonds. Disulfide bonds are essential for structural integrity and antibacterial activity, since activity is lost after treatment with reducing agents. Thanks to disulfide bonds and N-terminal pyroglutamate, the protein is extremely stable in a wide pH and temperature range and insensitive toward proteases.

The protein resides in the secreted. It localises to the target cell membrane. In terms of biological role, antimicrobial peptide that acts against Gram-positive bacteria (Listeria spp., Enterococcus spp., B.subtilis, B.anthracis, P.aeruginosa). Is not active against Gram-negative bacteria. It selectively inhibits peptidoglycan biosynthesis through complex formation with the cell wall precursor lipid II (1:1 molar ratio), probably anchoring lipid II to the membrane, thus inhibiting cell wall synthesis. The interaction with lipid II involves the third position of the pentapeptide. Shows bactericidal activity at about 2-fold minimal inhibitory concentrations (MIC), but does not form pore across the membrane. The polypeptide is Fungal defensin copsin (Coprinopsis cinerea (Inky cap fungus)).